Reading from the N-terminus, the 539-residue chain is Glycerophosphoinositol inositolphosphodiesterase GDPD2 (539 aa).

Residues Met1–Trp40 lie on the Cytoplasmic side of the membrane. A helical transmembrane segment spans residues Phe41–Leu61. Over Leu62–Ser83 the chain is Extracellular. A helical transmembrane segment spans residues Leu84–Gly104. Residues Leu105 to Lys121 are Cytoplasmic-facing. Residues Val122–Trp142 form a helical membrane-spanning segment. Over Arg143–Gln154 the chain is Extracellular. Residues Ala155–Val175 traverse the membrane as a helical segment. The Cytoplasmic segment spans residues Ala176–Val189. Residues Leu190 to Ile210 form a helical membrane-spanning segment. Topologically, residues Ser211–Tyr491 are extracellular. The 256-residue stretch at Pro225–Gln480 folds into the GP-PDE domain. Residues Glu257, Asp259, and His272 each coordinate a divalent metal cation. N-linked (GlcNAc...) asparagine glycosylation is present at Asn333. Residues Leu492 to Leu512 traverse the membrane as a helical segment. Residues Arg513–Glu539 are Cytoplasmic-facing.

It belongs to the glycerophosphoryl diester phosphodiesterase family. Requires Ca(2+) as cofactor. Detected in spleen, femur and calvaria.

It is found in the cell membrane. Its subcellular location is the cytoplasm. The protein resides in the cytoskeleton. It carries out the reaction sn-glycero-3-phospho-1D-myo-inositol + H2O = 1D-myo-inositol 1-phosphate + glycerol + H(+). Its function is as follows. Has glycerophosphoinositol inositolphosphodiesterase activity and specifically hydrolyzes glycerophosphoinositol, with no activity for other substrates such as glycerophosphoinositol 4-phosphate, glycerophosphocholine, glycerophosphoethanolamine, and glycerophosphoserine. Accelerates the program of osteoblast differentiation and growth. May play a role in remodeling of the actin cytoskeleton. This chain is Glycerophosphoinositol inositolphosphodiesterase GDPD2 (Gdpd2), found in Mus musculus (Mouse).